The sequence spans 169 residues: S-ribosylhomocysteine lyase (169 aa).

3 residues coordinate Fe cation: His54, His58, and Cys128.

It belongs to the LuxS family. Homodimer. Requires Fe cation as cofactor.

The enzyme catalyses S-(5-deoxy-D-ribos-5-yl)-L-homocysteine = (S)-4,5-dihydroxypentane-2,3-dione + L-homocysteine. Functionally, involved in the synthesis of autoinducer 2 (AI-2) which is secreted by bacteria and is used to communicate both the cell density and the metabolic potential of the environment. The regulation of gene expression in response to changes in cell density is called quorum sensing. Catalyzes the transformation of S-ribosylhomocysteine (RHC) to homocysteine (HC) and 4,5-dihydroxy-2,3-pentadione (DPD). The chain is S-ribosylhomocysteine lyase from Shewanella amazonensis (strain ATCC BAA-1098 / SB2B).